A 214-amino-acid polypeptide reads, in one-letter code: Calcineurin B homologous protein 3 (214 aa).

A lipid anchor (N-myristoyl glycine) is attached at Gly2. One can recognise an EF-hand domain in the interval 110–145 (CRKDKLRFLFNMYDTDNDSKITLEEYRKVVEELLSG). Ca(2+) is bound by residues Asp123, Asp125, Asp127, Lys129, and Glu134.

It belongs to the calcineurin regulatory subunit family. CHP subfamily. As to quaternary structure, monomer. Homodimer.

It is found in the nucleus. Its subcellular location is the cytoplasm. It localises to the membrane. The protein localises to the cell membrane. The protein resides in the cell projection. It is found in the lamellipodium. Its subcellular location is the ruffle membrane. Functions as an integral cofactor in cell pH regulation by controlling plasma membrane-type Na(+)/H(+) exchange activity. Promotes the induction of hematopoietic stem cell differentiation toward megakaryocytic lineage. Essential for the coupling of ERK cascade activation with the expression of ETS family genes in megakaryocytic differentiation. Also involved in granulocytic differentiation in a ERK-dependent manner. Inhibits the phosphatase activity of calcineurin. This chain is Calcineurin B homologous protein 3 (tesc), found in Xenopus tropicalis (Western clawed frog).